The following is a 242-amino-acid chain: Lectin-like protein At1g53060 (242 aa).

The legume-lectin like stretch occupies residues 3 to 237 (FHGDAEYASE…RHEILDWSFE (235 aa)). Position 207 is a phosphoserine (serine 207).

It belongs to the leguminous lectin family.

The sequence is that of Lectin-like protein At1g53060 from Arabidopsis thaliana (Mouse-ear cress).